Here is a 467-residue protein sequence, read N- to C-terminus: 3-isopropylmalate dehydratase large subunit (467 aa).

Positions 347, 408, and 411 each coordinate [4Fe-4S] cluster.

Belongs to the aconitase/IPM isomerase family. LeuC type 1 subfamily. Heterodimer of LeuC and LeuD. The cofactor is [4Fe-4S] cluster.

It catalyses the reaction (2R,3S)-3-isopropylmalate = (2S)-2-isopropylmalate. Its pathway is amino-acid biosynthesis; L-leucine biosynthesis; L-leucine from 3-methyl-2-oxobutanoate: step 2/4. Its function is as follows. Catalyzes the isomerization between 2-isopropylmalate and 3-isopropylmalate, via the formation of 2-isopropylmaleate. The chain is 3-isopropylmalate dehydratase large subunit from Bordetella bronchiseptica (strain ATCC BAA-588 / NCTC 13252 / RB50) (Alcaligenes bronchisepticus).